The primary structure comprises 200 residues: Recombination protein RecR (200 aa).

The C4-type zinc finger occupies 57–72 (CSHCRTFTENERCEIC). The region spanning 81–176 (GLLCVVESPA…KVSRIAHGVP (96 aa)) is the Toprim domain.

Belongs to the RecR family.

In terms of biological role, may play a role in DNA repair. It seems to be involved in an RecBC-independent recombinational process of DNA repair. It may act with RecF and RecO. The protein is Recombination protein RecR of Aeromonas hydrophila subsp. hydrophila (strain ATCC 7966 / DSM 30187 / BCRC 13018 / CCUG 14551 / JCM 1027 / KCTC 2358 / NCIMB 9240 / NCTC 8049).